A 398-amino-acid chain; its full sequence is 1-deoxy-D-xylulose 5-phosphate reductoisomerase (398 aa).

Threonine 10, glycine 11, serine 12, isoleucine 13, glycine 36, lysine 37, asparagine 38, and asparagine 124 together coordinate NADPH. 1-deoxy-D-xylulose 5-phosphate is bound at residue lysine 125. Glutamate 126 is an NADPH binding site. Aspartate 150 is a Mn(2+) binding site. 4 residues coordinate 1-deoxy-D-xylulose 5-phosphate: serine 151, glutamate 152, serine 186, and histidine 209. Glutamate 152 is a Mn(2+) binding site. Residue glycine 215 coordinates NADPH. 4 residues coordinate 1-deoxy-D-xylulose 5-phosphate: serine 222, asparagine 227, lysine 228, and glutamate 231. Residue glutamate 231 coordinates Mn(2+).

Belongs to the DXR family. In terms of assembly, homodimer. Requires Mg(2+) as cofactor. Mn(2+) serves as cofactor. It depends on Co(2+) as a cofactor.

It catalyses the reaction 2-C-methyl-D-erythritol 4-phosphate + NADP(+) = 1-deoxy-D-xylulose 5-phosphate + NADPH + H(+). It participates in isoprenoid biosynthesis; isopentenyl diphosphate biosynthesis via DXP pathway; isopentenyl diphosphate from 1-deoxy-D-xylulose 5-phosphate: step 1/6. With respect to regulation, inhibited by fosmidomycin. In terms of biological role, catalyzes the NADPH-dependent rearrangement and reduction of 1-deoxy-D-xylulose-5-phosphate (DXP) to 2-C-methyl-D-erythritol 4-phosphate (MEP). The protein is 1-deoxy-D-xylulose 5-phosphate reductoisomerase (dxr) of Escherichia coli (strain K12).